The following is a 528-amino-acid chain: Ladinin-1 (528 aa).

Residues 1-404 (MSVSRKDWSA…NSETPLTRSA (404 aa)) are disordered. A phosphoserine mark is found at Ser38, Ser56, Ser62, Ser72, and Ser76. Basic residues predominate over residues 88–97 (RTRKERRQRR). A Phosphoserine modification is found at Ser119. Basic and acidic residues predominate over residues 134 to 173 (KKVEALPRRRLSREQRGPWAQDEERLKNRELAEGEKRLPE). SEK repeat units follow at residues 184–186 (SEK), 190–192 (SEK), 202–204 (SEK), and 208–210 (SEK). The interval 184-281 (SEKTPVSEKT…MQERKLVSEK (98 aa)) is 6 X SEK repeats. 2 stretches are compositionally biased toward basic and acidic residues: residues 218 to 231 (SLTE…KLVP) and 267 to 279 (IVSE…KLVS). 2 SEK repeats span residues 269 to 271 (SEK) and 279 to 281 (SEK). Residues 304-316 (EQPQTTGGSQATT) show a composition bias toward polar residues. Phosphoserine occurs at positions 328, 358, 367, 405, and 496. Residues 365-377 (TPSPTLLTYSSSL) are compositionally biased toward low complexity. The disordered stretch occupies residues 492 to 528 (KTQDSGDHGSQEVRKEASVTKRAQWGSKPSTSLDAEV). The span at 495–510 (DSGDHGSQEVRKEASV) shows a compositional bias: basic and acidic residues. A compositionally biased stretch (polar residues) spans 518–528 (SKPSTSLDAEV).

Expressed in kidney, lung and keratinocytes followed by liver, spleen and brain. Not expressed in testis, skeletal and heart muscle and in fibroblasts.

The protein localises to the secreted. It localises to the extracellular space. The protein resides in the extracellular matrix. It is found in the basement membrane. Functionally, anchoring filament protein which is a component of the basement membrane zone. The polypeptide is Ladinin-1 (Lad1) (Mus musculus (Mouse)).